Reading from the N-terminus, the 200-residue chain is HTH-type transcriptional regulator Hpr (200 aa).

An HTH marR-type domain is found at 13–157; it reads AMLFSQRIAQ…MMCIVRNIYG (145 aa). The segment at residues 63–86 is a DNA-binding region (H-T-H motif); that stretch reads ISEIAKFGVMHVSTAFNFSKKLEE.

In terms of assembly, homodimer.

Negative regulator of protease production and sporulation. The polypeptide is HTH-type transcriptional regulator Hpr (Geobacillus thermodenitrificans (strain NG80-2)).